A 687-amino-acid polypeptide reads, in one-letter code: MEFLGDSQNHDSSETEKKNKKKKRFHRHTPHQIQRLESTFNECQHPDEKQRNQLSRELGLAPRQIKFWFQNRRTQKKAQHERADNCALKEENDKIRCENIAIREAIKHAICPSCGDSPVNEDSYFDEQKLRIENAQLRDELERVSSIAAKFLGRPISHLPPLLNPMHVSPLELFHTGPSLDFDLLPGSCSSMSVPSLPSQPNLVLSEMDKSLMTNIAVTAMEELLRLLQTNEPLWIKTDGCRDVLNLENYENMFTRSSTSGGKKNNLGMEASRSSGVVFTNAITLVDMLMNSVKLTELFPSIVASSKTLAVISSGLRGNHGDALHLMIEELQVLSPLVTTREFCVLRYCQQIEHGTWAIVNVSYEFPQFISQSRSYRFPSGCLIQDMSNGYSKVTWVEHGEFEEQEPIHEMFKDIVHKGLAFGAERWIATLQRMCERFTNLLEPATSSLDLGGVIPSPEGKRSIMRLAHRMVSNFCLSVGTSNNTRSTVVSGLDEFGIRVTSHKSRHEPNGMVLCAATSFWLPISPQNVFNFLKDERTRPQWDVLSNGNSVQEVAHITNGSNPGNCISVLRGFNASSSQNNMLILQESCIDSSSAALVIYTPVDLPALNIAMSGQDTSYIPILPSGFAISPDGSSKGGGSLITVGFQIMVSGLQPAKLNMESMETVNNLINTTVHQIKTTLNCPSTA.

Residues 1–32 (MEFLGDSQNHDSSETEKKNKKKKRFHRHTPHQ) form a disordered region. The span at 8–17 (QNHDSSETEK) shows a compositional bias: basic and acidic residues. Over residues 18–30 (KNKKKKRFHRHTP) the composition is skewed to basic residues. The segment at residues 21–80 (KKKRFHRHTPHQIQRLESTFNECQHPDEKQRNQLSRELGLAPRQIKFWFQNRRTQKKAQH) is a DNA-binding region (homeobox). A coiled-coil region spans residues 87–150 (ALKEENDKIR…LERVSSIAAK (64 aa)). The START domain occupies 206-440 (SEMDKSLMTN…LQRMCERFTN (235 aa)).

Belongs to the HD-ZIP homeobox family. Class IV subfamily. In terms of assembly, interacts with BBM. Expressed in apical meristems and young epidermal tissue including trichomes and stipules. Expressed in lateral root tips, the L1 layer of apical inflorescence meristems and early flower primordia, carpel and stamen filament epidermis, stigma papillae, ovule primordia, nucellus and embryo.

The protein resides in the nucleus. Probable transcription factor that acts as a negative regulator of trichome branching in association with HDG11. Seems to promote cell differentiation. May regulate cell differentiation and proliferation during root and shoot meristem development. Acts as a positive regulator of SCL18/LAS expression. Involved, together with PDF2, in the regulation of flower organs development by promoting the expression of APETALA 3 (AP3) in the epidermis and internal cell layers of developing flowers. This Arabidopsis thaliana (Mouse-ear cress) protein is Homeobox-leucine zipper protein HDG12.